A 374-amino-acid polypeptide reads, in one-letter code: MAGTDREKALDAALAQIERQFGKGAVMRMGDRTNEPIEVIPTGSTALDVALGVGGIPRGRVVEVYGPESSGKTTLTLHAVANAQKAGGQVAFVDAEHALDPEYAKKLGVDIDNLILSQPDNGEQALEIVDMLVRSGALDLIVIDSVAALVPRAEIEGEMGDSHVGLQARLMSQALRKITSALNQSKTTAIFINQLREKIGVMFGSPETTTGGRALKFYASVRLDIRRIETLKDGTDAVGNRTRVKVVKNKVAPPFKQAEFDILYGQGISREGGLIDMGVENGFVRKAGAWYTYEGDQLGQGKENARNFLKDNPDLANEIEKKIKQKLGVGVHPEESATEPGADAASAAPADAAPAVPAPTTAKATKSKAAAAKS.

Residue 66–73 (GPESSGKT) coordinates ATP. The segment at 327–374 (LGVGVHPEESATEPGADAASAAPADAAPAVPAPTTAKATKSKAAAAKS) is disordered. The segment covering 338–374 (TEPGADAASAAPADAAPAVPAPTTAKATKSKAAAAKS) has biased composition (low complexity).

This sequence belongs to the RecA family.

Its subcellular location is the cytoplasm. Its function is as follows. Can catalyze the hydrolysis of ATP in the presence of single-stranded DNA, the ATP-dependent uptake of single-stranded DNA by duplex DNA, and the ATP-dependent hybridization of homologous single-stranded DNAs. It interacts with LexA causing its activation and leading to its autocatalytic cleavage. In Streptomyces lividans, this protein is Protein RecA.